The following is a 344-amino-acid chain: Lysophosphatidic acid receptor 6 (344 aa).

Residues 1-19 (MVSVNSSHCFYNDSFKYTL) are Extracellular-facing. An N-linked (GlcNAc...) asparagine glycan is attached at Asn-5. Residues 20–46 (YGCMFSMVFVLGLISNCVAIYIFICVL) traverse the membrane as a helical segment. Residues 47–55 (KVRNETTTY) lie on the Cytoplasmic side of the membrane. Residues 56–79 (MINLAMSDLLFVFTLPFRIFYFTT) form a helical membrane-spanning segment. Topologically, residues 80-92 (RNWPFGDLLCKIS) are extracellular. A disulfide bridge links Cys-89 with Cys-168. A helical membrane pass occupies residues 93 to 112 (VMLFYTNMYGSILFLTCISV). Residues 113–133 (DRFLAIVYPFKSKTLRTKRNA) are Cytoplasmic-facing. A helical transmembrane segment spans residues 134–154 (KIVCTGVWLTVIGGSAPAVFV). Topologically, residues 155–181 (QSTHSQGNNASEACFENFPEATWKTYL) are extracellular. The chain crosses the membrane as a helical span at residues 182-209 (SRIVIFIEIVGFFIPLILNVTCSSMVLK). The Cytoplasmic portion of the chain corresponds to 210-227 (TLTKPVTLSRSKINKTKV). The helical transmembrane segment at 228-253 (LKMIFVHLIIFCFCFVPYNINLILYS) threads the bilayer. Topologically, residues 254–272 (LVRTQTFVNCSVVAAVRTM) are extracellular. The chain crosses the membrane as a helical span at residues 273 to 292 (YPITLCIAVSNCCFDPIVYY). Residue Cys-284 is the site of S-palmitoyl cysteine attachment. Over 293 to 344 (FTSDTIQNSIKMKNWSVRRSDFRFSEVHGAENFIQHNLQTLKSKIFDNESAA) the chain is Cytoplasmic.

It belongs to the G-protein coupled receptor 1 family. Expressed ubiquitously, including in skin and hair follicle cells. Detected in both Henle's and Huxley's layers of the inner root sheath of the hair follicle and in suprabasal layers of the epidermis (at protein level). Expressed at low levels in peripheral blood leukocytes.

The protein localises to the cell membrane. Binds to oleoyl-L-alpha-lysophosphatidic acid (LPA). Intracellular cAMP is involved in the receptor activation. Important for the maintenance of hair growth and texture. This Homo sapiens (Human) protein is Lysophosphatidic acid receptor 6 (LPAR6).